A 701-amino-acid polypeptide reads, in one-letter code: Elongation factor G (701 aa).

The 284-residue stretch at 8 to 291 folds into the tr-type G domain; the sequence is SRYRNIGIVA…AVIDYLPAPV (284 aa). Residues 17–24, 89–93, and 143–146 contribute to the GTP site; these read AHVDAGKT, DTPGH, and NKMD.

This sequence belongs to the TRAFAC class translation factor GTPase superfamily. Classic translation factor GTPase family. EF-G/EF-2 subfamily.

It localises to the cytoplasm. Functionally, catalyzes the GTP-dependent ribosomal translocation step during translation elongation. During this step, the ribosome changes from the pre-translocational (PRE) to the post-translocational (POST) state as the newly formed A-site-bound peptidyl-tRNA and P-site-bound deacylated tRNA move to the P and E sites, respectively. Catalyzes the coordinated movement of the two tRNA molecules, the mRNA and conformational changes in the ribosome. The polypeptide is Elongation factor G (Pseudomonas fluorescens (strain SBW25)).